The following is a 116-amino-acid chain: uncharacterized protein (116 aa).

Residues 22–42 traverse the membrane as a helical segment; the sequence is LIFLVVNLKVPAVGLELFLLV.

It is found in the membrane. This is an uncharacterized protein from Saccharomyces cerevisiae (strain ATCC 204508 / S288c) (Baker's yeast).